Here is a 314-residue protein sequence, read N- to C-terminus: Ribosomal protein L11 methyltransferase (314 aa).

S-adenosyl-L-methionine contacts are provided by threonine 161, glycine 182, aspartate 204, and asparagine 248.

This sequence belongs to the methyltransferase superfamily. PrmA family.

Its subcellular location is the cytoplasm. It catalyses the reaction L-lysyl-[protein] + 3 S-adenosyl-L-methionine = N(6),N(6),N(6)-trimethyl-L-lysyl-[protein] + 3 S-adenosyl-L-homocysteine + 3 H(+). In terms of biological role, methylates ribosomal protein L11. The polypeptide is Ribosomal protein L11 methyltransferase (Listeria welshimeri serovar 6b (strain ATCC 35897 / DSM 20650 / CCUG 15529 / CIP 8149 / NCTC 11857 / SLCC 5334 / V8)).